Consider the following 427-residue polypeptide: Serine hydroxymethyltransferase (427 aa).

Residues Leu-117 and Gly-121–Leu-123 contribute to the (6S)-5,6,7,8-tetrahydrofolate site. Lys-226 is modified (N6-(pyridoxal phosphate)lysine).

The protein belongs to the SHMT family. In terms of assembly, homodimer. Requires pyridoxal 5'-phosphate as cofactor.

The protein localises to the cytoplasm. It catalyses the reaction (6R)-5,10-methylene-5,6,7,8-tetrahydrofolate + glycine + H2O = (6S)-5,6,7,8-tetrahydrofolate + L-serine. The enzyme catalyses L-threonine = acetaldehyde + glycine. The catalysed reaction is L-allo-threonine = acetaldehyde + glycine. It participates in one-carbon metabolism; tetrahydrofolate interconversion. It functions in the pathway amino-acid biosynthesis; glycine biosynthesis; glycine from L-serine: step 1/1. Its primary function is to catalyze the reversible interconversion of serine and glycine with tetrahydrofolate (THF) serving as the one-carbon carrier. This reaction serves as the major source of one-carbon groups required for the biosynthesis of purines, thymidylate, methionine, and other important biomolecules. Also exhibits THF-independent aldolase activity toward beta-hydroxyamino acids, producing glycine and aldehydes, via a retro-aldol mechanism. Thus, is able to catalyze the cleavage of L-threonine, L-allo-threonine, L-threo-beta-phenylserine and L-erythro-beta-phenylserine. This second activity is likely to be physiological in H.thermophilus, which is an organism that lacks the ortholog gene for the 'real' threonine aldolase characterized in mesophilic bacteria (LtaE), yeast and plants. The polypeptide is Serine hydroxymethyltransferase (Hydrogenobacter thermophilus (strain DSM 6534 / IAM 12695 / TK-6)).